A 241-amino-acid polypeptide reads, in one-letter code: UPF0280 protein MK0206 (241 aa).

It belongs to the UPF0280 family.

The protein is UPF0280 protein MK0206 of Methanopyrus kandleri (strain AV19 / DSM 6324 / JCM 9639 / NBRC 100938).